The sequence spans 574 residues: Proline--tRNA ligase (574 aa).

Belongs to the class-II aminoacyl-tRNA synthetase family. ProS type 1 subfamily. In terms of assembly, homodimer.

The protein localises to the cytoplasm. It carries out the reaction tRNA(Pro) + L-proline + ATP = L-prolyl-tRNA(Pro) + AMP + diphosphate. Its function is as follows. Catalyzes the attachment of proline to tRNA(Pro) in a two-step reaction: proline is first activated by ATP to form Pro-AMP and then transferred to the acceptor end of tRNA(Pro). As ProRS can inadvertently accommodate and process non-cognate amino acids such as alanine and cysteine, to avoid such errors it has two additional distinct editing activities against alanine. One activity is designated as 'pretransfer' editing and involves the tRNA(Pro)-independent hydrolysis of activated Ala-AMP. The other activity is designated 'posttransfer' editing and involves deacylation of mischarged Ala-tRNA(Pro). The misacylated Cys-tRNA(Pro) is not edited by ProRS. The chain is Proline--tRNA ligase from Pseudoalteromonas translucida (strain TAC 125).